The following is a 213-amino-acid chain: uncharacterized protein (213 aa).

Residues 1–14 (MSSDVLVTTPAQRQ) show a composition bias toward polar residues. The interval 1-26 (MSSDVLVTTPAQRQTEPHAEAVSRNR) is disordered. The HTH tetR-type domain occupies 29-89 (QATFRKVLAA…EVYLDLVRQV (61 aa)).

This is an uncharacterized protein from Mycobacterium tuberculosis (strain CDC 1551 / Oshkosh).